Reading from the N-terminus, the 317-residue chain is Taste receptor type 2 member 14 (317 aa).

Over 1–7 (MGGVIKS) the chain is Extracellular. The chain crosses the membrane as a helical span at residues 8 to 28 (IFTFVLIVEFIIGNLGNSFIA). Topologically, residues 29-55 (LVNCIDWVKGRKISSVDRILTALAISK) are cytoplasmic. A helical membrane pass occupies residues 56–76 (ISLVWLIFGSWCVSVFFPALF). Residues 77-87 (ATEKMFRMLTN) are Extracellular-facing. T86 and W89 together coordinate cholesterol. Residues 88–108 (IWTVINHFSVWLATGLGTFYF) form a helical membrane-spanning segment. Residues 109–129 (LKIANFSNSIFLYLKWRVKKV) lie on the Cytoplasmic side of the membrane. Residues 130 to 150 (VLVLLLVTSVFLFLNIALINI) traverse the membrane as a helical segment. Topologically, residues 151-184 (HINASINGYRRNKTCSSDSSNFTRFSSLIVLTST) are extracellular. 3 N-linked (GlcNAc...) asparagine glycosylation sites follow: N153, N162, and N171. V180 is a binding site for cholesterol. Residues 185 to 205 (VFIFIPFTLSLAMFLLLIFSX) form a helical membrane-spanning segment. Residues 206–232 (WKHRKKMQHTVKRSGDASTKAHRGVKS) lie on the Cytoplasmic side of the membrane. The helical transmembrane segment at 233-253 (VXTFFLLYAIFCLSFFISVWT) threads the bilayer. The Extracellular portion of the chain corresponds to 254–261 (SERLEENL). A helical transmembrane segment spans residues 262 to 282 (IILSQVMGMAYPSCHSCVLIL). 2 residues coordinate cholesterol: S265 and M268. At 283 to 317 (GNKKLRQASLSVLLWLRYMFKDGEPSGHKEFRESS) the chain is on the cytoplasmic side.

The protein belongs to the G-protein coupled receptor T2R family. As to quaternary structure, core component of the TAS2R14-GNAI1 complex, consisting of TAS2R14, GNAI1, GNB1 and GNG2; within the complex interacts with GNAI1. Core component of the TAS2R14-GNAT3 complex, consisting of TAS2R14, GNAT3, GNB1 and GNG2; within the complex interacts with GNAT3. Core component of the TAS2R14-GNAS2 complex, consisting of TAS2R14, GNAS2, GNB1 and GNG2; within the complex interacts with GNAS2.

Its subcellular location is the membrane. The catalysed reaction is Ca(2+)(in) = Ca(2+)(out). It carries out the reaction 3',5'-cyclic AMP(in) = 3',5'-cyclic AMP(out). With respect to regulation, basal activity is enhanced by binding to bitter tastants, such as flufenamic acid and aristolochic acid. Regulated by cholesterol in a concentration-dependent manner. Its function is as follows. Gustducin-linked G-protein coupled receptor that plays a role in the perception of bitterness. The activity of this receptor stimulates GNAT3, activating the gustducin G-protein pathway. Likely plays a role in sensing the chemical composition of the gastrointestinal content and other extra-oral tissues via the inhibitory G-protein pathways. In Pan troglodytes (Chimpanzee), this protein is Taste receptor type 2 member 14 (TAS2R14).